We begin with the raw amino-acid sequence, 338 residues long: Plasminogen (338 aa).

The Kringle 5 domain occupies 9–88 (CMLGIGKGYQ…LFDYCDVPQC (80 aa)). 9 disulfides stabilise this stretch: Cys9–Cys88, Cys30–Cys71, Cys59–Cys83, Cys95–Cys213, Cys105–Cys113, Cys135–Cys151, Cys227–Cys294, Cys257–Cys273, and Cys284–Cys312. In terms of domain architecture, Peptidase S1 spans 109–336 (IVGGCVAIAH…FINWIERIMQ (228 aa)). Ser125 carries the phosphoserine modification. Residues His150 and Asp193 each act as charge relay system in the active site. The active-site Charge relay system is the Ser288.

The protein belongs to the peptidase S1 family. Plasminogen subfamily. In terms of assembly, interacts with CSPG4 and AMOT. Interacts (via the Kringle domains) with HRG; the interaction tethers PLG to the cell surface and enhances its activation. Interacts (via Kringle 4 domain) with ADA; the interaction stimulates PLG activation when in complex with DPP4. Angiostatin: Interacts with ATP5F1A; the interaction inhibits most of the angiogenic effects of angiostatin.

Its subcellular location is the secreted. It catalyses the reaction Preferential cleavage: Lys-|-Xaa &gt; Arg-|-Xaa, higher selectivity than trypsin. Converts fibrin into soluble products.. With respect to regulation, converted into plasmin by plasminogen activators, both plasminogen and its activator being bound to fibrin. Activated with catalytic amounts of streptokinase. Plasmin dissolves the fibrin of blood clots and acts as a proteolytic factor in a variety of other processes including embryonic development, tissue remodeling, tumor invasion, and inflammation. In ovulation, weakens the walls of the Graafian follicle. It activates the urokinase-type plasminogen activator, collagenases and several complement zymogens, such as C1, C4 and C5. Cleavage of fibronectin and laminin leads to cell detachment and apoptosis. Also cleaves fibrin, thrombospondin and von Willebrand factor. Its role in tissue remodeling and tumor invasion may be modulated by CSPG4. Binds to cells. The chain is Plasminogen (PLG) from Equus caballus (Horse).